The primary structure comprises 299 residues: ATP phosphoribosyltransferase (299 aa).

It belongs to the ATP phosphoribosyltransferase family. Long subfamily. The cofactor is Mg(2+).

It localises to the cytoplasm. It carries out the reaction 1-(5-phospho-beta-D-ribosyl)-ATP + diphosphate = 5-phospho-alpha-D-ribose 1-diphosphate + ATP. The protein operates within amino-acid biosynthesis; L-histidine biosynthesis; L-histidine from 5-phospho-alpha-D-ribose 1-diphosphate: step 1/9. Feedback inhibited by histidine. Functionally, catalyzes the condensation of ATP and 5-phosphoribose 1-diphosphate to form N'-(5'-phosphoribosyl)-ATP (PR-ATP). Has a crucial role in the pathway because the rate of histidine biosynthesis seems to be controlled primarily by regulation of HisG enzymatic activity. This is ATP phosphoribosyltransferase from Shewanella oneidensis (strain ATCC 700550 / JCM 31522 / CIP 106686 / LMG 19005 / NCIMB 14063 / MR-1).